The primary structure comprises 73 residues: Gastricsin (73 aa).

A propeptide spans Ser-1–Ile-43 (activation peptide). Residues Tyr-57–Leu-73 enclose the Peptidase A1 domain.

This sequence belongs to the peptidase A1 family.

The protein resides in the secreted. It catalyses the reaction More restricted specificity than pepsin A, but shows preferential cleavage at Tyr-|-Xaa bonds. High activity on hemoglobin.. Its function is as follows. Hydrolyzes a variety of proteins. This chain is Gastricsin (PGC), found in Sus scrofa (Pig).